A 160-amino-acid chain; its full sequence is Complexin-4 (160 aa).

Residues 14-44 (KNLGFGGGSEEKKEEGGTSDPAAAKGMTREE) form a disordered region. At cysteine 157 the chain carries Cysteine methyl ester. The S-farnesyl cysteine moiety is linked to residue cysteine 157. The propeptide at 158–160 (SVM) is removed in mature form.

This sequence belongs to the complexin/synaphin family. In terms of assembly, weakly binds to the SNARE core complex containing SNAP25, VAMP2 and STX1A. Farnesylation mediates presynaptic targeting and is important for function in neurotransmitter release. Present specifically in the retina (at protein level). Expressed in the outer nuclear layer of the retina (at protein level). Strongly expressed at rod photoreceptor ribbon synapses (at protein level). Not expressed at conventional amacrine cell synapses, nor at cone photoreceptor ribbon synapses (at protein level). Weakly expressed at cone photoreceptor synaptic terminals (at protein level). Not expressed in the brain (at protein level).

It localises to the synapse. The protein resides in the cell membrane. Functionally, complexin that regulates SNARE protein complex-mediated synaptic vesicle fusion. Required for the maintenance of synaptic ultrastructure in the adult retina. Positively regulates synaptic transmission through synaptic vesicle availability and exocytosis of neurotransmitters at photoreceptor ribbon synapses in the retina. Suppresses tonic photoreceptor activity and baseline 'noise' by suppression of Ca(2+) vesicle tonic release and the facilitation of evoked synchronous and asynchronous Ca(2+) vesicle release. In Mus musculus (Mouse), this protein is Complexin-4 (Cplx4).